The chain runs to 239 residues: Pyridoxal 5'-phosphate synthase subunit PdxS (239 aa).

Position 21 (Asp21) interacts with D-ribose 5-phosphate. The active-site Schiff-base intermediate with D-ribose 5-phosphate is Lys78. Gly150 lines the D-ribose 5-phosphate pocket. Arg162 is a D-glyceraldehyde 3-phosphate binding site. D-ribose 5-phosphate is bound by residues Gly211 and 232 to 233 (GS).

It belongs to the PdxS/SNZ family. In terms of assembly, in the presence of PdxT, forms a dodecamer of heterodimers.

The catalysed reaction is aldehydo-D-ribose 5-phosphate + D-glyceraldehyde 3-phosphate + L-glutamine = pyridoxal 5'-phosphate + L-glutamate + phosphate + 3 H2O + H(+). Its pathway is cofactor biosynthesis; pyridoxal 5'-phosphate biosynthesis. Its function is as follows. Catalyzes the formation of pyridoxal 5'-phosphate from ribose 5-phosphate (RBP), glyceraldehyde 3-phosphate (G3P) and ammonia. The ammonia is provided by the PdxT subunit. Can also use ribulose 5-phosphate and dihydroxyacetone phosphate as substrates, resulting from enzyme-catalyzed isomerization of RBP and G3P, respectively. The polypeptide is Pyridoxal 5'-phosphate synthase subunit PdxS (Francisella tularensis).